Reading from the N-terminus, the 129-residue chain is Glycine cleavage system H protein (129 aa).

The Lipoyl-binding domain occupies 24 to 106 (IAVIGITAYA…YGDGWLIKVR (83 aa)). The residue at position 65 (Lys-65) is an N6-lipoyllysine.

It belongs to the GcvH family. As to quaternary structure, the glycine cleavage system is composed of four proteins: P, T, L and H. (R)-lipoate serves as cofactor.

The glycine cleavage system catalyzes the degradation of glycine. The H protein shuttles the methylamine group of glycine from the P protein to the T protein. The chain is Glycine cleavage system H protein from Synechococcus sp. (strain JA-3-3Ab) (Cyanobacteria bacterium Yellowstone A-Prime).